The primary structure comprises 550 residues: Chaperonin GroEL (550 aa).

ATP-binding positions include 30–33 (TLGP), Lys-51, 87–91 (DGTTT), Gly-415, 479–481 (NAA), and Asp-495. The tract at residues 526–550 (KDEKSDLGNSSAPSAGGMGGMGGMM) is disordered. Over residues 541-550 (GGMGGMGGMM) the composition is skewed to gly residues.

This sequence belongs to the chaperonin (HSP60) family. Forms a cylinder of 14 subunits composed of two heptameric rings stacked back-to-back. Interacts with the co-chaperonin GroES.

The protein localises to the cytoplasm. It catalyses the reaction ATP + H2O + a folded polypeptide = ADP + phosphate + an unfolded polypeptide.. In terms of biological role, together with its co-chaperonin GroES, plays an essential role in assisting protein folding. The GroEL-GroES system forms a nano-cage that allows encapsulation of the non-native substrate proteins and provides a physical environment optimized to promote and accelerate protein folding. The polypeptide is Chaperonin GroEL (Buchnera aphidicola subsp. Baizongia pistaciae (strain Bp)).